The sequence spans 344 residues: Ketol-acid reductoisomerase (NADP(+)) (344 aa).

One can recognise a KARI N-terminal Rossmann domain in the interval Glu2–Thr181. Residues Tyr25–Gln28, Arg48, Ser52, and Asp82–Gln85 contribute to the NADP(+) site. His107 is a catalytic residue. Position 133 (Gly133) interacts with NADP(+). One can recognise a KARI C-terminal knotted domain in the interval Thr182–Ile327. Residues Asp190, Glu194, Glu226, and Glu230 each contribute to the Mg(2+) site. A substrate-binding site is contributed by Ser251.

Belongs to the ketol-acid reductoisomerase family. It depends on Mg(2+) as a cofactor.

The catalysed reaction is (2R)-2,3-dihydroxy-3-methylbutanoate + NADP(+) = (2S)-2-acetolactate + NADPH + H(+). The enzyme catalyses (2R,3R)-2,3-dihydroxy-3-methylpentanoate + NADP(+) = (S)-2-ethyl-2-hydroxy-3-oxobutanoate + NADPH + H(+). It functions in the pathway amino-acid biosynthesis; L-isoleucine biosynthesis; L-isoleucine from 2-oxobutanoate: step 2/4. The protein operates within amino-acid biosynthesis; L-valine biosynthesis; L-valine from pyruvate: step 2/4. In terms of biological role, involved in the biosynthesis of branched-chain amino acids (BCAA). Catalyzes an alkyl-migration followed by a ketol-acid reduction of (S)-2-acetolactate (S2AL) to yield (R)-2,3-dihydroxy-isovalerate. In the isomerase reaction, S2AL is rearranged via a Mg-dependent methyl migration to produce 3-hydroxy-3-methyl-2-ketobutyrate (HMKB). In the reductase reaction, this 2-ketoacid undergoes a metal-dependent reduction by NADPH to yield (R)-2,3-dihydroxy-isovalerate. The protein is Ketol-acid reductoisomerase (NADP(+)) of Alicyclobacillus acidocaldarius subsp. acidocaldarius (strain ATCC 27009 / DSM 446 / BCRC 14685 / JCM 5260 / KCTC 1825 / NBRC 15652 / NCIMB 11725 / NRRL B-14509 / 104-IA) (Bacillus acidocaldarius).